Here is a 142-residue protein sequence, read N- to C-terminus: Large ribosomal subunit protein uL11 (142 aa).

The protein belongs to the universal ribosomal protein uL11 family. As to quaternary structure, part of the ribosomal stalk of the 50S ribosomal subunit. Interacts with L10 and the large rRNA to form the base of the stalk. L10 forms an elongated spine to which L12 dimers bind in a sequential fashion forming a multimeric L10(L12)X complex. Post-translationally, one or more lysine residues are methylated.

Forms part of the ribosomal stalk which helps the ribosome interact with GTP-bound translation factors. This Rhodopseudomonas palustris (strain BisB5) protein is Large ribosomal subunit protein uL11.